Consider the following 676-residue polypeptide: DNA ligase (676 aa).

NAD(+) contacts are provided by residues 35–39, 84–85, and Glu115; these read DAVYD and SL. Catalysis depends on Lys117, which acts as the N6-AMP-lysine intermediate. Residues Arg138, Glu177, Lys296, and Lys320 each contribute to the NAD(+) site. 4 residues coordinate Zn(2+): Cys414, Cys417, Cys432, and Cys437. One can recognise a BRCT domain in the interval 599–676; sequence NANLKLVGKT…SEAELLKILA (78 aa).

The protein belongs to the NAD-dependent DNA ligase family. LigA subfamily. It depends on Mg(2+) as a cofactor. The cofactor is Mn(2+).

The enzyme catalyses NAD(+) + (deoxyribonucleotide)n-3'-hydroxyl + 5'-phospho-(deoxyribonucleotide)m = (deoxyribonucleotide)n+m + AMP + beta-nicotinamide D-nucleotide.. Functionally, DNA ligase that catalyzes the formation of phosphodiester linkages between 5'-phosphoryl and 3'-hydroxyl groups in double-stranded DNA using NAD as a coenzyme and as the energy source for the reaction. It is essential for DNA replication and repair of damaged DNA. The chain is DNA ligase from Trichormus variabilis (strain ATCC 29413 / PCC 7937) (Anabaena variabilis).